Consider the following 192-residue polypeptide: Imidazoleglycerol-phosphate dehydratase (192 aa).

This sequence belongs to the imidazoleglycerol-phosphate dehydratase family.

Its subcellular location is the cytoplasm. It carries out the reaction D-erythro-1-(imidazol-4-yl)glycerol 3-phosphate = 3-(imidazol-4-yl)-2-oxopropyl phosphate + H2O. Its pathway is amino-acid biosynthesis; L-histidine biosynthesis; L-histidine from 5-phospho-alpha-D-ribose 1-diphosphate: step 6/9. The protein is Imidazoleglycerol-phosphate dehydratase of Staphylococcus saprophyticus subsp. saprophyticus (strain ATCC 15305 / DSM 20229 / NCIMB 8711 / NCTC 7292 / S-41).